A 239-amino-acid chain; its full sequence is Sugar fermentation stimulation protein homolog (239 aa).

Belongs to the SfsA family.

This is Sugar fermentation stimulation protein homolog from Maridesulfovibrio salexigens (strain ATCC 14822 / DSM 2638 / NCIMB 8403 / VKM B-1763) (Desulfovibrio salexigens).